A 683-amino-acid chain; its full sequence is DNA ligase (683 aa).

Residues 42–46 (DAEYD), 91–92 (SL), and Glu122 each bind NAD(+). Lys124 serves as the catalytic N6-AMP-lysine intermediate. Positions 145, 182, 299, and 323 each coordinate NAD(+). Residues Cys417, Cys420, Cys435, and Cys441 each contribute to the Zn(2+) site. Residues 602 to 683 (APQGVLAGKT…MRKLLEGQTT (82 aa)) enclose the BRCT domain.

The protein belongs to the NAD-dependent DNA ligase family. LigA subfamily. Requires Mg(2+) as cofactor. It depends on Mn(2+) as a cofactor.

It catalyses the reaction NAD(+) + (deoxyribonucleotide)n-3'-hydroxyl + 5'-phospho-(deoxyribonucleotide)m = (deoxyribonucleotide)n+m + AMP + beta-nicotinamide D-nucleotide.. Its function is as follows. DNA ligase that catalyzes the formation of phosphodiester linkages between 5'-phosphoryl and 3'-hydroxyl groups in double-stranded DNA using NAD as a coenzyme and as the energy source for the reaction. It is essential for DNA replication and repair of damaged DNA. This Paraburkholderia phymatum (strain DSM 17167 / CIP 108236 / LMG 21445 / STM815) (Burkholderia phymatum) protein is DNA ligase.